The following is a 570-amino-acid chain: Molecular chaperone MKKS (570 aa).

Residue glycine 192–serine 199 participates in ATP binding. The interval lysine 198 to isoleucine 370 is substrate-binding apical domain.

The protein belongs to the TCP-1 chaperonin family. In terms of assembly, component of a complex composed at least of MKKS, BBS10, BBS12, TCP1, CCT2, CCT3, CCT4, CCT5 and CCT8. Interacts with STUB1. Interacts with BBS2 (via coiled coil domain). Interacts with CCDC28B. Interacts with BBS12. Interacts with SMARCC1, a component of the SWI/SNF complexes; the interaction takes place predominantly in the cytoplasm and may modulate SMARCC1 location. Interacts with DLEC1. As to expression, widely expressed in adult and fetal tissues.

Its subcellular location is the cytoplasm. The protein localises to the cytoskeleton. It localises to the microtubule organizing center. It is found in the centrosome. The protein resides in the cytosol. Its subcellular location is the nucleus. Probable molecular chaperone that assists the folding of proteins upon ATP hydrolysis. Plays a role in the assembly of BBSome, a complex involved in ciliogenesis regulating transports vesicles to the cilia. May play a role in protein processing in limb, cardiac and reproductive system development. May play a role in cytokinesis. In Homo sapiens (Human), this protein is Molecular chaperone MKKS.